A 573-amino-acid chain; its full sequence is Phosphoenolpyruvate-protein phosphotransferase (573 aa).

The active-site Tele-phosphohistidine intermediate is His190. Phosphoenolpyruvate is bound by residues Arg297 and Arg333. Positions 432 and 456 each coordinate Mg(2+). Phosphoenolpyruvate-binding positions include 455–456 and Arg466; that span reads ND. The Proton donor role is filled by Cys503.

The protein belongs to the PEP-utilizing enzyme family. Homodimer. Mg(2+) is required as a cofactor.

Its subcellular location is the cytoplasm. The enzyme catalyses L-histidyl-[protein] + phosphoenolpyruvate = N(pros)-phospho-L-histidyl-[protein] + pyruvate. Functionally, general (non sugar-specific) component of the phosphoenolpyruvate-dependent sugar phosphotransferase system (sugar PTS). This major carbohydrate active-transport system catalyzes the phosphorylation of incoming sugar substrates concomitantly with their translocation across the cell membrane. Enzyme I transfers the phosphoryl group from phosphoenolpyruvate (PEP) to the phosphoryl carrier protein (HPr). The sequence is that of Phosphoenolpyruvate-protein phosphotransferase (ptsI) from Priestia megaterium (Bacillus megaterium).